Here is a 315-residue protein sequence, read N- to C-terminus: Neuroguidin (315 aa).

Disordered stretches follow at residues 127-201 (SEND…KQKR) and 289-315 (VQDI…RKRK). 2 stretches are compositionally biased toward basic and acidic residues: residues 159–168 (KTKEQKEPSG) and 182–200 (YDGD…EKQK). Positions 181–206 (HYDGDLTEADRQKERVEKQKRAALRS) form a coiled coil. The segment covering 296–315 (KPKKKKIIKKGKKKVFRKRK) has biased composition (basic residues).

Belongs to the SAS10 family. Part of the small subunit (SSU) processome, composed of more than 70 proteins and the RNA chaperone small nucleolar RNA (snoRNA) U3.

It localises to the nucleus. Its subcellular location is the nucleolus. It is found in the chromosome. The protein localises to the centromere. The protein resides in the cytoplasm. It localises to the cell projection. Its subcellular location is the axon. It is found in the dendrite. The protein localises to the filopodium. Functionally, part of the small subunit (SSU) processome, first precursor of the small eukaryotic ribosomal subunit. During the assembly of the SSU processome in the nucleolus, many ribosome biogenesis factors, an RNA chaperone and ribosomal proteins associate with the nascent pre-rRNA and work in concert to generate RNA folding, modifications, rearrangements and cleavage as well as targeted degradation of pre-ribosomal RNA by the RNA exosome. Its dissociation from the complex determines the transition from state pre-A1 to state pre-A1*. May inhibit mRNA translation. In Danio rerio (Zebrafish), this protein is Neuroguidin (ngdn).